The chain runs to 451 residues: Metalloprotease MJ0996 (451 aa).

The protein belongs to the peptidase U62 family.

Its function is as follows. Probable metalloprotease. The protein is Metalloprotease MJ0996 of Methanocaldococcus jannaschii (strain ATCC 43067 / DSM 2661 / JAL-1 / JCM 10045 / NBRC 100440) (Methanococcus jannaschii).